Consider the following 111-residue polypeptide: Gastrula zinc finger protein XlCGF32.1 (111 aa).

C2H2-type zinc fingers lie at residues 6-28 (FDCT…FLCH), 34-56 (FVCV…LRIH), 62-84 (SVCP…MRIH), and 89-111 (FMCS…LQIH).

The protein belongs to the krueppel C2H2-type zinc-finger protein family.

The protein localises to the nucleus. Functionally, may be involved in transcriptional regulation. In Xenopus laevis (African clawed frog), this protein is Gastrula zinc finger protein XlCGF32.1.